A 247-amino-acid polypeptide reads, in one-letter code: ATP synthase subunit a, chloroplastic (247 aa).

5 helical membrane-spanning segments follow: residues 38–58, 95–115, 134–154, 199–219, and 220–240; these read QVLI…LIAV, VPFI…GALL, INTT…AGLS, LVVV…VMFL, and GLFT…AYIG.

This sequence belongs to the ATPase A chain family. In terms of assembly, F-type ATPases have 2 components, CF(1) - the catalytic core - and CF(0) - the membrane proton channel. CF(1) has five subunits: alpha(3), beta(3), gamma(1), delta(1), epsilon(1). CF(0) has four main subunits: a, b, b' and c.

The protein localises to the plastid. Its subcellular location is the chloroplast thylakoid membrane. Functionally, key component of the proton channel; it plays a direct role in the translocation of protons across the membrane. This is ATP synthase subunit a, chloroplastic from Brachypodium distachyon (Purple false brome).